Here is a 428-residue protein sequence, read N- to C-terminus: Serine--tRNA ligase (428 aa).

An L-serine-binding site is contributed by 235–237 (TAE). 266–268 (RSE) contributes to the ATP binding site. Glu-289 provides a ligand contact to L-serine. Residue 353 to 356 (EISS) coordinates ATP. Residue Ser-389 participates in L-serine binding.

This sequence belongs to the class-II aminoacyl-tRNA synthetase family. Type-1 seryl-tRNA synthetase subfamily. Homodimer. The tRNA molecule binds across the dimer.

It localises to the cytoplasm. The enzyme catalyses tRNA(Ser) + L-serine + ATP = L-seryl-tRNA(Ser) + AMP + diphosphate + H(+). It carries out the reaction tRNA(Sec) + L-serine + ATP = L-seryl-tRNA(Sec) + AMP + diphosphate + H(+). It functions in the pathway aminoacyl-tRNA biosynthesis; selenocysteinyl-tRNA(Sec) biosynthesis; L-seryl-tRNA(Sec) from L-serine and tRNA(Sec): step 1/1. Functionally, catalyzes the attachment of serine to tRNA(Ser). Is also able to aminoacylate tRNA(Sec) with serine, to form the misacylated tRNA L-seryl-tRNA(Sec), which will be further converted into selenocysteinyl-tRNA(Sec). This is Serine--tRNA ligase from Pasteurella multocida (strain Pm70).